The sequence spans 563 residues: MKIRNSPSFHGGSGYSVFRARNLTFKKVVKKVMRDQSNNQFMIQMENMIRRIVREEIQRSLQPFLSSSCVSMERSRSETPSSRSRLKLCFINSPPSSIFTGSKIEAEDGSPLVIELVDATTNTLVSTGPFSSSRVELVPLNADFTEESWTVEGFNRNILTQREGKRPLLTGDLTVMLKNGVGVITGDIAFSDNSSWTRSRKFRLGAKLTGDGAVEARSEAFGCRDQRGESYKKHHPPCPSDEVWRLEKIAKDGVSATRLAERKILTVKDFRRLYTVNRNELHNIIGAGVSKKTWNTIVSHAMDCVLDETECYIYNANTPGVTLLFNSVYELIRVSFNGNDIQNLDQPILDQLKAEAYQNLNRITAVNDRTFVGHPQRSLQCPQDPGFVVTCSGSQHIDFQGSLDPSSSSMALCHKASSSTVHPDVLMSFDNSSTARFHIDKKFLPTFGNSFKVSELDQVHGKSQTVVTKGCIENNEEDENAFSYHHHDDMTSSWSPGTHQAVETMFLTVSETEEAGMFDVHFANVNLGSPRARWCKVKAAFKVRAAFKEVRRHTTARNPREGL.

The calmodulin-binding stretch occupies residues 1-76; it reads MKIRNSPSFH…SSCVSMERSR (76 aa). The DNA-binding stretch occupies residues 147–263; that stretch reads ESWTVEGFNR…VSATRLAERK (117 aa).

This sequence belongs to the plant ACBP60 protein family. In terms of assembly, interacts with calmodulin (CaM) in the presence of calcium ions; this interaction is required for defense responses. (Microbial infection) Interacts with V.dahliae SCP41; the interaction is direct and inhibits CBP60G. Expressed in seedlings, roots, leaves, inflorescences and flowers, and, to a lower extent, in siliques. Particularly present in guard cells.

It is found in the nucleus. Functionally, transcription activator that binds DNA in a sequence-specific manner, 5'-GAAATTTTGG-3', to promote the expression of target genes. Recruited to the promoter of ICS1 and other defense-related genes (e.g. PR1, PR2 and EDS5) in response to both biotic (e.g. Pseudomonas syringae pv. maculicola ES4326, P.syringae pv. tomato DC3000, and microbe-associated molecular patterns (MAMPs) such as flg22) and abiotic stresses (e.g. UV-B, drought and abscisic acid), thus triggering rapid defense responses by stimulating salicylic acid (SA) biosynthesis. Involved in basal and systemic acquired resistance to P.syringae and Hyaloperonospora arabidopsidis. Mediates resistance to drought and sensitivity to abscisic acid (ABA), especially for ABA-mediated signaling process that regulates early seedling growth. This chain is Calmodulin-binding protein 60 G, found in Arabidopsis thaliana (Mouse-ear cress).